Consider the following 284-residue polypeptide: Small ribosomal subunit protein uS5z (284 aa).

The segment covering 1 to 19 (MAERGGEGGAERGGDRGDF) has biased composition (basic and acidic residues). The disordered stretch occupies residues 1–51 (MAERGGEGGAERGGDRGDFGRGFGGGRGGGRGRDRGPRGRGRRGGRASEET). Residues 20 to 29 (GRGFGGGRGG) are compositionally biased toward gly residues. An S5 DRBM domain is found at 95-158 (LKDEVMKIMP…ILAKLSVVPV (64 aa)).

Belongs to the universal ribosomal protein uS5 family.

The polypeptide is Small ribosomal subunit protein uS5z (RPS2A) (Arabidopsis thaliana (Mouse-ear cress)).